The primary structure comprises 650 residues: DNA-directed RNA polymerase III subunit rpc3 (650 aa).

4 disordered regions span residues 133–163, 264–283, 288–313, and 400–440; these read PTAV…EGHT, RGAK…KKAR, AVDE…NIPM, and LAGS…SSDG. Positions 149-158 are enriched in acidic residues; the sequence is GEGVEGEGIE. Acidic residues predominate over residues 288 to 307; the sequence is AVDEDEEEEEENEWSEDEMG. The tract at residues 577-598 is leucine-zipper; sequence TYKSMSRCLQRLRFERNRLKEF.

The protein belongs to the RNA polymerase beta chain family. In terms of assembly, component of the RNA polymerase III (Pol III) complex consisting of 17 subunits.

The protein localises to the nucleus. DNA-dependent RNA polymerase catalyzes the transcription of DNA into RNA using the four ribonucleoside triphosphates as substrates. Specific core component of RNA polymerase III which synthesizes small RNAs, such as 5S rRNA and tRNAs. The protein is DNA-directed RNA polymerase III subunit rpc3 (rpc82) of Aspergillus terreus (strain NIH 2624 / FGSC A1156).